Consider the following 319-residue polypeptide: MIKPTPAAVGSYVTRRCDRLFKSAAAAAGSTVVAAILLIAIFLLLRAVPSLRANHANFFTSAKFDTTGDKNLAFGIRDLFMVTVLSSICALVLAVPVAIGIAVFLTQYVPARLSRLFSAMVDLLAAVPSIIFGLWGVFVLAPKLQPIAVFLNHNLGWLFLFKQGNVSLAGGGTIFTSGIVLAVMILPIVTSVSREVFRHTPLIQIEAAQALGATKWEVVQMTVLPFGRSGVAAAAMLGLGRALGETLAVLIILRSAARSGNWSLFDGGYTFASKIASAASEFSQPLPTGAYIAAGFALFFLTFVVNAVARAISGGRVNG.

The next 7 membrane-spanning stretches (helical) occupy residues 25-45 (AAAA…FLLL), 84-104 (VLSS…IAVF), 120-140 (MVDL…VFVL), 141-161 (APKL…LFLF), 169-189 (AGGG…LPIV), 233-253 (AAAM…LIIL), and 289-309 (GAYI…NAVA). The ABC transmembrane type-1 domain maps to 80–309 (FMVTVLSSIC…FLTFVVNAVA (230 aa)).

The protein belongs to the binding-protein-dependent transport system permease family. CysTW subfamily.

Its subcellular location is the cell membrane. Part of a binding-protein-dependent transport system for phosphate; probably responsible for the translocation of the substrate across the membrane. The protein is Phosphate transport system permease protein PstC (pstC) of Mycobacterium leprae (strain TN).